The following is a 193-amino-acid chain: Putative kinase protein 029R (193 aa).

Residue 9-17 (GIIGSGKSS) coordinates ATP. Substrate is bound by residues glutamate 31, tyrosine 43, and glutamine 54. Glutamate 78 acts as the Proton acceptor in catalysis. Substrate-binding residues include arginine 79 and glutamate 142.

This sequence belongs to the DCK/DGK family.

The polypeptide is Putative kinase protein 029R (Aedes vexans (Inland floodwater mosquito)).